A 360-amino-acid polypeptide reads, in one-letter code: MAGNSIGQLFRVTTFGESHGIALGCIVDGMPPGLALSEDDIQPDLDRRKPGTSKYTTPRREEDKVQILSGVFDGKTTGTSIGMIIKNTDQRSQDYGEIKDRFRPGHADFTYQQKYGLRDYRGGGRSSARETVMRVAAGAIAKKYLREYFGIEVRGYLSQIGEIKIDPQVVADVSKIDWAKVNSNPFFCPDESAVEKFDELIRELKKAGNSIGAKLTIVAEHVPVGLGEPVFDRLDADLAHALMGINAVKAVEIGDGFAVVEQKGTEHRDEMTPEGFCSNHAGGILGGISSGQPIIATIALKPTSSITVVGRSVNLNNEPVDVITKGRHDPCVGIRAVPIAEAMMAIVLLDHLLRFKAQCK.

A disordered region spans residues 36–60 (LSEDDIQPDLDRRKPGTSKYTTPRR). Arg-48 contributes to the NADP(+) binding site. FMN is bound by residues 125-127 (RSS), 246-247 (NA), Gly-286, 301-305 (KPTSS), and Arg-327.

The protein belongs to the chorismate synthase family. Homotetramer. The cofactor is FMNH2.

It catalyses the reaction 5-O-(1-carboxyvinyl)-3-phosphoshikimate = chorismate + phosphate. The protein operates within metabolic intermediate biosynthesis; chorismate biosynthesis; chorismate from D-erythrose 4-phosphate and phosphoenolpyruvate: step 7/7. Its function is as follows. Catalyzes the anti-1,4-elimination of the C-3 phosphate and the C-6 proR hydrogen from 5-enolpyruvylshikimate-3-phosphate (EPSP) to yield chorismate, which is the branch point compound that serves as the starting substrate for the three terminal pathways of aromatic amino acid biosynthesis. This reaction introduces a second double bond into the aromatic ring system. The polypeptide is Chorismate synthase (Histophilus somni (strain 129Pt) (Haemophilus somnus)).